Here is a 148-residue protein sequence, read N- to C-terminus: Methylated-DNA--protein-cysteine methyltransferase (148 aa).

The active-site Nucleophile; methyl group acceptor is Cys-90.

Belongs to the MGMT family.

The protein localises to the cytoplasm. It catalyses the reaction a 6-O-methyl-2'-deoxyguanosine in DNA + L-cysteinyl-[protein] = S-methyl-L-cysteinyl-[protein] + a 2'-deoxyguanosine in DNA. The catalysed reaction is a 4-O-methyl-thymidine in DNA + L-cysteinyl-[protein] = a thymidine in DNA + S-methyl-L-cysteinyl-[protein]. Involved in the cellular defense against the biological effects of O6-methylguanine (O6-MeG) and O4-methylthymine (O4-MeT) in DNA. Repairs the methylated nucleobase in DNA by stoichiometrically transferring the methyl group to a cysteine residue in the enzyme. This is a suicide reaction: the enzyme is irreversibly inactivated. In Pyrobaculum aerophilum (strain ATCC 51768 / DSM 7523 / JCM 9630 / CIP 104966 / NBRC 100827 / IM2), this protein is Methylated-DNA--protein-cysteine methyltransferase (ogt).